Reading from the N-terminus, the 148-residue chain is Flagellar assembly factor FliW (148 aa).

Belongs to the FliW family. In terms of assembly, interacts with translational regulator CsrA and flagellin(s).

It localises to the cytoplasm. Its function is as follows. Acts as an anti-CsrA protein, binds CsrA and prevents it from repressing translation of its target genes, one of which is flagellin. Binds to flagellin and participates in the assembly of the flagellum. In Ruminiclostridium cellulolyticum (strain ATCC 35319 / DSM 5812 / JCM 6584 / H10) (Clostridium cellulolyticum), this protein is Flagellar assembly factor FliW.